A 340-amino-acid polypeptide reads, in one-letter code: DNA-directed RNA polymerase subunit alpha (340 aa).

Residues 1–236 (MSVIQKNWQE…DQLQLFINFE (236 aa)) form an alpha N-terminal domain (alpha-NTD) region. The segment at 252 to 340 (FNKNLLRKVD…DLAKKLEEPY (89 aa)) is alpha C-terminal domain (alpha-CTD).

It belongs to the RNA polymerase alpha chain family. Homodimer. The RNAP catalytic core consists of 2 alpha, 1 beta, 1 beta' and 1 omega subunit. When a sigma factor is associated with the core the holoenzyme is formed, which can initiate transcription.

It catalyses the reaction RNA(n) + a ribonucleoside 5'-triphosphate = RNA(n+1) + diphosphate. Functionally, DNA-dependent RNA polymerase catalyzes the transcription of DNA into RNA using the four ribonucleoside triphosphates as substrates. The chain is DNA-directed RNA polymerase subunit alpha from Rhodospirillum rubrum (strain ATCC 11170 / ATH 1.1.1 / DSM 467 / LMG 4362 / NCIMB 8255 / S1).